Reading from the N-terminus, the 174-residue chain is RNA pyrophosphohydrolase (174 aa).

In terms of domain architecture, Nudix hydrolase spans 14–167 (PYRPCVGLMV…KRKVYEEVVA (154 aa)). Residues 55-76 (GGIDKGEEPLEAAIRELYEETG) carry the Nudix box motif.

The protein belongs to the Nudix hydrolase family. RppH subfamily. It depends on a divalent metal cation as a cofactor.

Functionally, accelerates the degradation of transcripts by removing pyrophosphate from the 5'-end of triphosphorylated RNA, leading to a more labile monophosphorylated state that can stimulate subsequent ribonuclease cleavage. This is RNA pyrophosphohydrolase from Brucella anthropi (strain ATCC 49188 / DSM 6882 / CCUG 24695 / JCM 21032 / LMG 3331 / NBRC 15819 / NCTC 12168 / Alc 37) (Ochrobactrum anthropi).